The following is a 57-amino-acid chain: UPF0337 protein SAV_1088 (57 aa).

Basic and acidic residues-rich tracts occupy residues 1 to 15 (MAGD…EQAK) and 36 to 57 (QAEK…VFKH). The tract at residues 1–57 (MAGDQKAKAKMEQAKGKAKAAAGRAVGNERMAAEGQAEKSKGDARQAKEKTKDVFKH) is disordered.

It belongs to the UPF0337 (CsbD) family.

This chain is UPF0337 protein SAV_1088, found in Streptomyces avermitilis (strain ATCC 31267 / DSM 46492 / JCM 5070 / NBRC 14893 / NCIMB 12804 / NRRL 8165 / MA-4680).